The sequence spans 314 residues: Acetyl-coenzyme A carboxylase carboxyl transferase subunit alpha (314 aa).

The region spanning 32-289 (EIDMLEASLK…KKMFLKHLNE (258 aa)) is the CoA carboxyltransferase C-terminal domain.

Belongs to the AccA family. In terms of assembly, acetyl-CoA carboxylase is a heterohexamer composed of biotin carboxyl carrier protein (AccB), biotin carboxylase (AccC) and two subunits each of ACCase subunit alpha (AccA) and ACCase subunit beta (AccD).

It localises to the cytoplasm. The catalysed reaction is N(6)-carboxybiotinyl-L-lysyl-[protein] + acetyl-CoA = N(6)-biotinyl-L-lysyl-[protein] + malonyl-CoA. It participates in lipid metabolism; malonyl-CoA biosynthesis; malonyl-CoA from acetyl-CoA: step 1/1. In terms of biological role, component of the acetyl coenzyme A carboxylase (ACC) complex. First, biotin carboxylase catalyzes the carboxylation of biotin on its carrier protein (BCCP) and then the CO(2) group is transferred by the carboxyltransferase to acetyl-CoA to form malonyl-CoA. The sequence is that of Acetyl-coenzyme A carboxylase carboxyl transferase subunit alpha from Staphylococcus epidermidis (strain ATCC 35984 / DSM 28319 / BCRC 17069 / CCUG 31568 / BM 3577 / RP62A).